The chain runs to 93 residues: MMSGIKVEKLNDKLVISWLLSKIEVPISDIVKVTFDDTYGGEEKTAIRIGTPYGATDRLVILTHSNTYILFTTDAISIKNKIFSFINEQLQQK.

It belongs to the UPF0457 family.

This Geobacillus thermodenitrificans (strain NG80-2) protein is UPF0457 protein GTNG_2792.